A 192-amino-acid polypeptide reads, in one-letter code: Protein GrpE (192 aa).

The protein belongs to the GrpE family. Homodimer.

The protein localises to the cytoplasm. Its function is as follows. Participates actively in the response to hyperosmotic and heat shock by preventing the aggregation of stress-denatured proteins, in association with DnaK and GrpE. It is the nucleotide exchange factor for DnaK and may function as a thermosensor. Unfolded proteins bind initially to DnaJ; upon interaction with the DnaJ-bound protein, DnaK hydrolyzes its bound ATP, resulting in the formation of a stable complex. GrpE releases ADP from DnaK; ATP binding to DnaK triggers the release of the substrate protein, thus completing the reaction cycle. Several rounds of ATP-dependent interactions between DnaJ, DnaK and GrpE are required for fully efficient folding. The sequence is that of Protein GrpE from Neisseria gonorrhoeae (strain ATCC 700825 / FA 1090).